The primary structure comprises 400 residues: PHD finger protein 24 (400 aa).

Glycine 2 is lipidated: N-myristoyl glycine. The span at 29-38 (RDRPSIRRGG) shows a compositional bias: basic and acidic residues. The interval 29-65 (RDRPSIRRGGELPGSRRGTVEGSVQEVQEEKEAEASA) is disordered. Arginine 36 is subject to Omega-N-methylarginine. Serine 43 carries the post-translational modification Phosphoserine. The residue at position 47 (threonine 47) is a Phosphothreonine. Serine 51 is subject to Phosphoserine. A PHD-type zinc finger spans residues 129 to 190 (NDEMCDVCEV…TGWSCYYCDN (62 aa)). Omega-N-methylarginine is present on arginine 307.

The sequence is that of PHD finger protein 24 from Mus musculus (Mouse).